The sequence spans 70 residues: Small ribosomal subunit protein bS21 (70 aa).

Belongs to the bacterial ribosomal protein bS21 family.

The protein is Small ribosomal subunit protein bS21 of Herminiimonas arsenicoxydans.